A 383-amino-acid chain; its full sequence is Chorismate synthase (383 aa).

Arg48 contacts NADP(+). FMN is bound by residues 125-127, Gly286, 301-305, and Arg328; these read RSS and HAPTS. Residues 361–383 are disordered; that stretch reads PDRLDDNPGQYETEYHPSSPQTN.

This sequence belongs to the chorismate synthase family. FMNH2 is required as a cofactor.

The catalysed reaction is 5-O-(1-carboxyvinyl)-3-phosphoshikimate = chorismate + phosphate. It participates in metabolic intermediate biosynthesis; chorismate biosynthesis; chorismate from D-erythrose 4-phosphate and phosphoenolpyruvate: step 7/7. Catalyzes the anti-1,4-elimination of the C-3 phosphate and the C-6 proR hydrogen from 5-enolpyruvylshikimate-3-phosphate (EPSP) to yield chorismate, which is the branch point compound that serves as the starting substrate for the three terminal pathways of aromatic amino acid biosynthesis. This reaction introduces a second double bond into the aromatic ring system. The polypeptide is Chorismate synthase (Haloquadratum walsbyi (strain DSM 16790 / HBSQ001)).